Here is a 298-residue protein sequence, read N- to C-terminus: Glycine--tRNA ligase alpha subunit (298 aa).

This sequence belongs to the class-II aminoacyl-tRNA synthetase family. Tetramer of two alpha and two beta subunits.

It is found in the cytoplasm. The enzyme catalyses tRNA(Gly) + glycine + ATP = glycyl-tRNA(Gly) + AMP + diphosphate. The sequence is that of Glycine--tRNA ligase alpha subunit (glyQ) from Helicobacter pylori (strain J99 / ATCC 700824) (Campylobacter pylori J99).